A 489-amino-acid polypeptide reads, in one-letter code: Glucose-1-phosphate adenylyltransferase small subunit, chloroplastic/amyloplastic (489 aa).

Residues 1–52 constitute a chloroplast transit peptide; it reads ITVPSTSSKNLQNSLAFSSSSLSGDKIQTTSFLNRRYCRISSRAPIVVSPKA.

It belongs to the bacterial/plant glucose-1-phosphate adenylyltransferase family. Heterotetramer. As to expression, prominently expressed in the leaves. A lower level expression is seen in the roots.

It is found in the plastid. It localises to the chloroplast. The protein localises to the amyloplast. The enzyme catalyses alpha-D-glucose 1-phosphate + ATP + H(+) = ADP-alpha-D-glucose + diphosphate. The protein operates within glycan biosynthesis; starch biosynthesis. Its activity is regulated as follows. Activated by 3'phosphoglycerate, inhibited by orthophosphate. Allosteric regulation. In terms of biological role, this protein plays a role in synthesis of starch. It catalyzes the synthesis of the activated glycosyl donor, ADP-glucose from Glc-1-P and ATP. The chain is Glucose-1-phosphate adenylyltransferase small subunit, chloroplastic/amyloplastic (AGPB1) from Beta vulgaris (Sugar beet).